Here is a 668-residue protein sequence, read N- to C-terminus: UvrABC system protein B (668 aa).

One can recognise a Helicase ATP-binding domain in the interval 25-413 (NGINTGLQHQ…QNTVQQVIRP (389 aa)). Residue 38-45 (GVTGSGKT) coordinates ATP. The Beta-hairpin motif lies at 91–114 (YYDYYQPEAYIAASDTYIEKDSSV). A Helicase C-terminal domain is found at 429-595 (QVEDALSEIN…TIIKNIDDML (167 aa)). One can recognise a UVR domain in the interval 629 to 664 (TKVIKALEKRMRAYAKELEFEKATTIRDKITEVKQK).

This sequence belongs to the UvrB family. In terms of assembly, forms a heterotetramer with UvrA during the search for lesions. Interacts with UvrC in an incision complex.

The protein localises to the cytoplasm. Functionally, the UvrABC repair system catalyzes the recognition and processing of DNA lesions. A damage recognition complex composed of 2 UvrA and 2 UvrB subunits scans DNA for abnormalities. Upon binding of the UvrA(2)B(2) complex to a putative damaged site, the DNA wraps around one UvrB monomer. DNA wrap is dependent on ATP binding by UvrB and probably causes local melting of the DNA helix, facilitating insertion of UvrB beta-hairpin between the DNA strands. Then UvrB probes one DNA strand for the presence of a lesion. If a lesion is found the UvrA subunits dissociate and the UvrB-DNA preincision complex is formed. This complex is subsequently bound by UvrC and the second UvrB is released. If no lesion is found, the DNA wraps around the other UvrB subunit that will check the other stand for damage. This is UvrABC system protein B from Francisella tularensis subsp. tularensis (strain SCHU S4 / Schu 4).